The sequence spans 514 residues: Calcium-binding mitochondrial carrier protein SCaMC-2 (514 aa).

Residues 1 to 234 (MARPRSLVSP…EKQTGMWWRH (234 aa)) lie on the Mitochondrial intermembrane side of the membrane. EF-hand domains follow at residues 56–91 (EHER…LGVH), 92–122 (RTEL…HYLR), 123–158 (DHEK…LGVN), and 159–194 (ISEQ…HSAE). Ca(2+) is bound by residues aspartate 69, asparagine 71, aspartate 73, aspartate 80, aspartate 105, aspartate 107, aspartate 109, glutamine 111, and glutamate 116. 3 Solcar repeats span residues 229–315 (GMWW…IKRI), 323–408 (LGIH…LKNA), and 420–508 (PGVF…LKLT). A helical membrane pass occupies residues 235-252 (LVAGGGAGAVSRTCTAPL). Residues 253 to 289 (DRLKVLMQVHASRSNNMSILGGFTHMIREGGFRSLWR) are Mitochondrial matrix-facing. The helical transmembrane segment at 290–309 (GNGINVIKIAPESAIKFMAY) threads the bilayer. Residues 310–332 (EQIKRIIGSNQETLGIHERFVAG) lie on the Mitochondrial intermembrane side of the membrane. Residues 333–346 (SLAGVIAQSSIYPM) traverse the membrane as a helical segment. The Mitochondrial matrix segment spans residues 347 to 382 (EVLKTRMALRKTGQYQGVLDCGKKILLQEGLSAFYK). A helical transmembrane segment spans residues 383–402 (GYVPNMLGIIPYAGIDLAVY). Residues 403 to 425 (ETLKNAWLQRYATSSADPGVFVL) lie on the Mitochondrial intermembrane side of the membrane. The chain crosses the membrane as a helical span at residues 426-443 (LACGTVSSTCGQLASYPL). Residues 444–482 (ALVRTRMQAEASVEGAPQMTMSKLFKHIVKTEGAFGLYR) lie on the Mitochondrial matrix side of the membrane. A helical transmembrane segment spans residues 483 to 502 (GLAPNFMKVIPAVSISYVVY). At 503 to 514 (ENLKLTLGVQSR) the chain is on the mitochondrial intermembrane side.

This sequence belongs to the mitochondrial carrier (TC 2.A.29) family.

It localises to the mitochondrion inner membrane. Functionally, calcium-dependent mitochondrial solute carrier. This is Calcium-binding mitochondrial carrier protein SCaMC-2 (slc25a25) from Xenopus laevis (African clawed frog).